The following is a 110-amino-acid chain: Phosphoribosyl-ATP pyrophosphatase (110 aa).

It belongs to the PRA-PH family.

Its subcellular location is the cytoplasm. It carries out the reaction 1-(5-phospho-beta-D-ribosyl)-ATP + H2O = 1-(5-phospho-beta-D-ribosyl)-5'-AMP + diphosphate + H(+). The protein operates within amino-acid biosynthesis; L-histidine biosynthesis; L-histidine from 5-phospho-alpha-D-ribose 1-diphosphate: step 2/9. The polypeptide is Phosphoribosyl-ATP pyrophosphatase (Stutzerimonas stutzeri (strain A1501) (Pseudomonas stutzeri)).